A 124-amino-acid chain; its full sequence is Small ribosomal subunit protein uS13 (124 aa).

Over residues 92–117 the composition is skewed to basic residues; that stretch reads RRGLPVRGQRTKSNARTRKGPRKTVA. Positions 92-124 are disordered; that stretch reads RRGLPVRGQRTKSNARTRKGPRKTVANKKIESK.

The protein belongs to the universal ribosomal protein uS13 family. In terms of assembly, part of the 30S ribosomal subunit. Forms a loose heterodimer with protein S19. Forms two bridges to the 50S subunit in the 70S ribosome.

Its function is as follows. Located at the top of the head of the 30S subunit, it contacts several helices of the 16S rRNA. In the 70S ribosome it contacts the 23S rRNA (bridge B1a) and protein L5 of the 50S subunit (bridge B1b), connecting the 2 subunits; these bridges are implicated in subunit movement. Contacts the tRNAs in the A and P-sites. The polypeptide is Small ribosomal subunit protein uS13 (Mycoplasmoides gallisepticum (strain R(low / passage 15 / clone 2)) (Mycoplasma gallisepticum)).